The primary structure comprises 118 residues: Ribonuclease P protein component (118 aa).

This sequence belongs to the RnpA family. As to quaternary structure, consists of a catalytic RNA component (M1 or rnpB) and a protein subunit.

The catalysed reaction is Endonucleolytic cleavage of RNA, removing 5'-extranucleotides from tRNA precursor.. In terms of biological role, RNaseP catalyzes the removal of the 5'-leader sequence from pre-tRNA to produce the mature 5'-terminus. It can also cleave other RNA substrates such as 4.5S RNA. The protein component plays an auxiliary but essential role in vivo by binding to the 5'-leader sequence and broadening the substrate specificity of the ribozyme. This chain is Ribonuclease P protein component, found in Vibrio cholerae serotype O1 (strain ATCC 39541 / Classical Ogawa 395 / O395).